A 407-amino-acid chain; its full sequence is Endo-1,4-beta-xylanase (407 aa).

Residues 1–28 (MRNVVRKPLTIGLALTLLLPMGMTATSA) form the signal peptide. One can recognise a GH10 domain in the interval 42–406 (ALNAPQLDQR…KPAYWAIIDH (365 aa)). Catalysis depends on E187, which acts as the Proton donor. The Nucleophile role is filled by E293.

Belongs to the glycosyl hydrolase 10 (cellulase F) family.

It is found in the secreted. The catalysed reaction is Endohydrolysis of (1-&gt;4)-beta-D-xylosidic linkages in xylans.. Its pathway is glycan degradation; xylan degradation. In Geobacillus stearothermophilus (Bacillus stearothermophilus), this protein is Endo-1,4-beta-xylanase.